The primary structure comprises 113 residues: Urocortin-2 (113 aa).

An N-terminal signal peptide occupies residues M1–G23. Residues T24 to T71 constitute a propeptide that is removed on maturation. The span at L37–S61 shows a compositional bias: low complexity. A disordered region spans residues L37–K64. V110 is modified (valine amide; partial).

Belongs to the sauvagine/corticotropin-releasing factor/urotensin I family. In terms of assembly, binds with high affinity to CRF receptors 2-alpha and 2-beta. Post-translationally, glycosylated.

The protein localises to the secreted. Its function is as follows. Suppresses food intake, delays gastric emptying and decreases heat-induced edema. Might represent an endogenous ligand for maintaining homeostasis after stress. This is Urocortin-2 (Ucn2) from Mus musculus (Mouse).